The sequence spans 801 residues: Bromodomain-containing protein 2 (801 aa).

Met1 carries the N-acetylmethionine modification. Thr6 is modified (phosphothreonine). Ser37 bears the Phosphoserine mark. Residues Ala53 to Gly73 are disordered. The Bromo 1 domain maps to Arg74–Met180. 6 residues coordinate a protein: Asp112, Tyr155, Asn156, Lys157, Asp160, and Asp161. Disordered stretches follow at residues Pro268–Gln349, Glu456–Lys647, and Glu737–Gly801. Residues Thr285 to Ser298 are compositionally biased toward low complexity. Residues Ser298, Ser301, and Ser305 each carry the phosphoserine modification. Positions Met316–Pro332 are enriched in basic and acidic residues. Positions Gly344–Met453 constitute a Bromo 2 domain. Residues Ser481–Glu514 show a composition bias toward acidic residues. The segment covering Lys544 to Arg566 has biased composition (basic residues). The Nuclear localization signal signature appears at Lys555–Lys559. Residues Gly592–Gly612 are compositionally biased toward gly residues. The 83-residue stretch at Asp632–Pro714 folds into the NET domain. Ser633 is subject to Phosphoserine. Residues Ser763–Thr795 show a composition bias toward low complexity.

Belongs to the BET family. As to quaternary structure, homodimer. Interacts with E2F1. Interacts with (acetylated) STAT3; promoting STAT3 recruitment to chromatin. Interacts with CTCF; promoting BRD2 recruitment to chromatin. (Microbial infection) Interacts with herpes virus 8 protein LANA1.

The protein localises to the nucleus. It is found in the chromosome. With respect to regulation, inhibited by JQ1, a thieno-triazolo-1,4-diazepine derivative, which specifically inhibits members of the BET family (BRD2, BRD3 and BRD4). The first bromo domain is inhibited by GSK778 (iBET-BD1), which specifically inhibits the first bromo domain of members of the BET family (BRD2, BRD3 and BRD4). The second bromo domain is inhibited by ABBV-744, which specifically inhibits the second bromo domain of members of the BET family (BRD2, BRD3 and BRD4). The second bromo domain is inhibited by GSK046 (iBET-BD2), which specifically inhibits the second bromo domain of members of the BET family (BRD2, BRD3 and BRD4). Functionally, chromatin reader protein that specifically recognizes and binds histone H4 acetylated at 'Lys-5' and 'Lys-12' (H4K5ac and H4K12ac, respectively), thereby controlling gene expression and remodeling chromatin structures. Recruits transcription factors and coactivators to target gene sites, and activates RNA polymerase II machinery for transcriptional elongation. Plays a key role in genome compartmentalization via its association with CTCF and cohesin: recruited to chromatin by CTCF and promotes formation of topologically associating domains (TADs) via its ability to bind acetylated histones, contributing to CTCF boundary formation and enhancer insulation. Also recognizes and binds acetylated non-histone proteins, such as STAT3. Involved in inflammatory response by regulating differentiation of naive CD4(+) T-cells into T-helper Th17: recognizes and binds STAT3 acetylated at 'Lys-87', promoting STAT3 recruitment to chromatin. In addition to acetylated lysines, also recognizes and binds lysine residues on histones that are both methylated and acetylated on the same side chain to form N6-acetyl-N6-methyllysine (Kacme), an epigenetic mark of active chromatin associated with increased transcriptional initiation. Specifically binds histone H4 acetyl-methylated at 'Lys-5' and 'Lys-12' (H4K5acme and H4K12acme, respectively). The sequence is that of Bromodomain-containing protein 2 from Homo sapiens (Human).